Here is a 466-residue protein sequence, read N- to C-terminus: mRNA-capping enzyme subunit alpha (466 aa).

The active-site N6-GMP-lysine intermediate is the Lys67. Residues 408-466 are disordered; that stretch reads REQGLKNAQKQFNHQASARSSLSQQHSTEPEQSQDQPKYVDDDDDNWSDDEPDTKRQKI. Residues 413 to 443 are compositionally biased toward polar residues; sequence KNAQKQFNHQASARSSLSQQHSTEPEQSQDQ. A compositionally biased stretch (acidic residues) spans 448 to 459; sequence DDDDDNWSDDEP.

Belongs to the eukaryotic GTase family. Heterodimer. The mRNA-capping enzyme is composed of two separate chains alpha and beta, respectively a mRNA guanylyltransferase and an mRNA 5'-triphosphate monophosphatase.

Its subcellular location is the nucleus. It carries out the reaction a 5'-end diphospho-ribonucleoside in mRNA + GTP + H(+) = a 5'-end (5'-triphosphoguanosine)-ribonucleoside in mRNA + diphosphate. Second step of mRNA capping. Transfer of the GMP moiety of GTP to the 5'-end of RNA via an enzyme-GMP covalent reaction intermediate. This Kluyveromyces lactis (strain ATCC 8585 / CBS 2359 / DSM 70799 / NBRC 1267 / NRRL Y-1140 / WM37) (Yeast) protein is mRNA-capping enzyme subunit alpha (CEG1).